The chain runs to 95 residues: NADH-quinone oxidoreductase subunit K (95 aa).

3 helical membrane passes run 1–21 (MSYL…VLTR), 25–45 (ILVF…LVGF), and 59–79 (MVIA…VAIF).

It belongs to the complex I subunit 4L family. NDH-1 is composed of 15 different subunits. Subunits NuoA, H, J, K, L, M, N constitute the membrane sector of the complex.

It localises to the cell inner membrane. It carries out the reaction a quinone + NADH + 5 H(+)(in) = a quinol + NAD(+) + 4 H(+)(out). In terms of biological role, NDH-1 shuttles electrons from NADH, via FMN and iron-sulfur (Fe-S) centers, to quinones in the respiratory chain. The immediate electron acceptor for the enzyme in this species is believed to be a menaquinone. Couples the redox reaction to proton translocation (for every two electrons transferred, four hydrogen ions are translocated across the cytoplasmic membrane), and thus conserves the redox energy in a proton gradient. The chain is NADH-quinone oxidoreductase subunit K from Thermus thermophilus (strain ATCC BAA-163 / DSM 7039 / HB27).